The primary structure comprises 626 residues: Serine/threonine-protein kinase ATG1a (626 aa).

Positions tyrosine 10–leucine 268 constitute a Protein kinase domain. ATP is bound by residues isoleucine 16–valine 24 and lysine 39. Aspartate 132 functions as the Proton acceptor in the catalytic mechanism. Residues lysine 288 to glutamate 308 show a composition bias toward polar residues. Residues lysine 288–serine 347 are disordered. The segment covering serine 315–serine 325 has biased composition (low complexity). The span at serine 330 to glutamate 339 shows a compositional bias: basic and acidic residues. Residues tyrosine 360–valine 363 carry the AIM (Atg8-family-interacting motif) motif.

The protein belongs to the protein kinase superfamily. Ser/Thr protein kinase family. In terms of assembly, interacts with ATG13A. Interacts with ATG8E. Binds to ATG8E on autophagic vesicles. Phosphorylated during nutrient starvation. Dephosphorylated in nutrient-rich conditions.

The protein localises to the cytoplasmic vesicle. It localises to the autophagosome. Functionally, serine/threonine protein kinase involved in autophagy in a nutritional condition-dependent manner. The ATG1-ATG13 protein kinase complex regulates downstream events required for autophagosome enclosure and/or vacuolar delivery. Becomes a target of autophagy under nutrient starvation. Connects autophagy to plant nutritional status. The chain is Serine/threonine-protein kinase ATG1a from Arabidopsis thaliana (Mouse-ear cress).